A 117-amino-acid polypeptide reads, in one-letter code: UPF0102 protein Rsph17029_0461 (117 aa).

This sequence belongs to the UPF0102 family.

The sequence is that of UPF0102 protein Rsph17029_0461 from Cereibacter sphaeroides (strain ATCC 17029 / ATH 2.4.9) (Rhodobacter sphaeroides).